Consider the following 341-residue polypeptide: DNA fragmentation factor subunit beta (341 aa).

The CIDE-N domain occupies 7–83; the sequence is KPKTFKLRSL…LLTAGQTWQG (77 aa).

Heterodimer of DFFA and DFFB. Interacts with H1-1.

The protein localises to the cytoplasm. Its subcellular location is the nucleus. Its activity is regulated as follows. Inhibited by DFFA (DFF45). Interacts with HIST1H1A. Functionally, nuclease that induces DNA fragmentation and chromatin condensation during apoptosis. Degrades naked DNA and induces apoptotic morphology. The polypeptide is DNA fragmentation factor subunit beta (DFFB) (Bos taurus (Bovine)).